Reading from the N-terminus, the 138-residue chain is ATP synthase epsilon chain (138 aa).

Belongs to the ATPase epsilon chain family. In terms of assembly, F-type ATPases have 2 components, CF(1) - the catalytic core - and CF(0) - the membrane proton channel. CF(1) has five subunits: alpha(3), beta(3), gamma(1), delta(1), epsilon(1). CF(0) has three main subunits: a, b and c.

It is found in the cell inner membrane. Functionally, produces ATP from ADP in the presence of a proton gradient across the membrane. This Geotalea daltonii (strain DSM 22248 / JCM 15807 / FRC-32) (Geobacter daltonii) protein is ATP synthase epsilon chain.